We begin with the raw amino-acid sequence, 242 residues long: ATP synthase subunit a (242 aa).

6 consecutive transmembrane segments (helical) span residues 29–49 (SSIYMLLASILALTYFYLAFY), 84–104 (FIPLVFSLFIFILFCNLLGMT), 114–134 (IIVTFTLAILVFLTVTIVGFV), 140–160 (FLTLFLPHGTPLWLAPLMIVI), 189–209 (VIAGFTVSLMIYLKFLPIPLM), and 210–230 (MILIGFEIFVAILQAYIFTIL).

It belongs to the ATPase A chain family. As to quaternary structure, F-type ATPases have 2 components, CF(1) - the catalytic core - and CF(0) - the membrane proton channel. CF(1) has five subunits: alpha(3), beta(3), gamma(1), delta(1), epsilon(1). CF(0) has three main subunits: a(1), b(2) and c(9-12). The alpha and beta chains form an alternating ring which encloses part of the gamma chain. CF(1) is attached to CF(0) by a central stalk formed by the gamma and epsilon chains, while a peripheral stalk is formed by the delta and b chains.

It is found in the cell inner membrane. Functionally, key component of the proton channel; it plays a direct role in the translocation of protons across the membrane. The chain is ATP synthase subunit a from Rickettsia massiliae (strain Mtu5).